Reading from the N-terminus, the 120-residue chain is uncharacterized protein (120 aa).

Residues 79–120 (TGNEIPPEPEQEVVASPVTEQKKAEPSAPPKGSKKKKRGKKK) form a disordered region. Over residues 110-120 (GSKKKKRGKKK) the composition is skewed to basic residues.

This is an uncharacterized protein from Schizosaccharomyces pombe (strain 972 / ATCC 24843) (Fission yeast).